We begin with the raw amino-acid sequence, 210 residues long: Redox-sensing transcriptional repressor Rex (210 aa).

Positions 16–55 form a DNA-binding region, H-T-H motif; that stretch reads VYSRHLTDVDRKGIVTISSGDIAEGVGVSPAQVRKDLAYF. An NAD(+)-binding site is contributed by 90–95; sequence GMGNLG.

It belongs to the transcriptional regulatory Rex family. Homodimer.

The protein resides in the cytoplasm. In terms of biological role, modulates transcription in response to changes in cellular NADH/NAD(+) redox state. The chain is Redox-sensing transcriptional repressor Rex from Desulfitobacterium hafniense (strain DSM 10664 / DCB-2).